We begin with the raw amino-acid sequence, 214 residues long: Probable transaldolase (214 aa).

K83 (schiff-base intermediate with substrate) is an active-site residue.

This sequence belongs to the transaldolase family. Type 3B subfamily.

Its subcellular location is the cytoplasm. The catalysed reaction is D-sedoheptulose 7-phosphate + D-glyceraldehyde 3-phosphate = D-erythrose 4-phosphate + beta-D-fructose 6-phosphate. It participates in carbohydrate degradation; pentose phosphate pathway; D-glyceraldehyde 3-phosphate and beta-D-fructose 6-phosphate from D-ribose 5-phosphate and D-xylulose 5-phosphate (non-oxidative stage): step 2/3. Functionally, transaldolase is important for the balance of metabolites in the pentose-phosphate pathway. The protein is Probable transaldolase of Carboxydothermus hydrogenoformans (strain ATCC BAA-161 / DSM 6008 / Z-2901).